The primary structure comprises 746 residues: Quiannulatene synthase (746 aa).

The segment at 1-336 is sesterterpenoid synthase; it reads MASEVIVISD…SRYPTKTELN (336 aa). Asp-95 contacts Mg(2+). The geranylfarnesyl diphosphate synthase stretch occupies residues 338 to 746; the sequence is PEVIIVDGEL…VELMLRRLWV (409 aa). The isopentenyl diphosphate site is built by Lys-465, Arg-468, and His-497. The Mg(2+) site is built by Asp-504 and Asp-508. Arg-513 is a binding site for dimethylallyl diphosphate. An isopentenyl diphosphate-binding site is contributed by Arg-514. Residues Lys-591, Thr-592, Gln-628, Asn-635, and Lys-645 each contribute to the dimethylallyl diphosphate site.

This sequence in the N-terminal section; belongs to the terpene synthase family. The protein in the C-terminal section; belongs to the FPP/GGPP synthase family. Mg(2+) serves as cofactor.

The catalysed reaction is isopentenyl diphosphate + (2E,6E)-farnesyl diphosphate = (2E,6E,10E)-geranylgeranyl diphosphate + diphosphate. It carries out the reaction (2E,6E,10E,14E)-geranylfarnesyl diphosphate = quiannulatene + diphosphate. It participates in secondary metabolite biosynthesis; terpenoid biosynthesis. Its function is as follows. Bifunctional sesterterpene synthase; part of the gene cluster that mediates the biosynthesis of the pentacyclic sesterterpene quiannulatic acid. The first step of the pathway is performed by the sesterterpene synthase (QS) that possesses both prenyl transferase and terpene cyclase activity, converting isopentenyl diphosphate and dimethylallyl diphosphate into geranylfarnesyl diphosphate (GFPP) and further converting GFPP into quiannulatene via an unprecedented cyclization mode which involves three rounds of hydride shifts and two successive C-C bond migrations to construct the 5-6-5-5-5 fused ring. The cytochrome P450 monooxygenase Qnn-P450 then oxidizes quiannulatene at C-19 in 3 successive reactions to afford quiannulatic acid. In Emericella variicolor (Aspergillus stellatus), this protein is Quiannulatene synthase.